We begin with the raw amino-acid sequence, 157 residues long: SsrA-binding protein (157 aa).

The protein belongs to the SmpB family.

It is found in the cytoplasm. Its function is as follows. Required for rescue of stalled ribosomes mediated by trans-translation. Binds to transfer-messenger RNA (tmRNA), required for stable association of tmRNA with ribosomes. tmRNA and SmpB together mimic tRNA shape, replacing the anticodon stem-loop with SmpB. tmRNA is encoded by the ssrA gene; the 2 termini fold to resemble tRNA(Ala) and it encodes a 'tag peptide', a short internal open reading frame. During trans-translation Ala-aminoacylated tmRNA acts like a tRNA, entering the A-site of stalled ribosomes, displacing the stalled mRNA. The ribosome then switches to translate the ORF on the tmRNA; the nascent peptide is terminated with the 'tag peptide' encoded by the tmRNA and targeted for degradation. The ribosome is freed to recommence translation, which seems to be the essential function of trans-translation. The protein is SsrA-binding protein of Chromohalobacter salexigens (strain ATCC BAA-138 / DSM 3043 / CIP 106854 / NCIMB 13768 / 1H11).